A 909-amino-acid chain; its full sequence is ABC transporter A family member 10 (909 aa).

The next 7 membrane-spanning stretches (helical) occupy residues 35-55 (VLVP…LDVV), 320-340 (IASM…FPVI), 374-394 (FLTL…AIGL), 406-426 (FIFY…ASSI), 433-453 (ATVV…FLFG), 465-485 (GILA…YEFA), and 507-527 (LFYL…SIDL). S555 is modified (phosphoserine). Positions 587-824 (IVCDNLKKVY…YGGSYVFTMT (238 aa)) constitute an ABC transporter domain. 625-632 (GPNGAGKT) contributes to the ATP binding site.

The protein belongs to the ABC transporter superfamily. ABCA family. CPR flippase (TC 3.A.1.211) subfamily.

The protein localises to the membrane. The protein is ABC transporter A family member 10 (ABCA10) of Arabidopsis thaliana (Mouse-ear cress).